We begin with the raw amino-acid sequence, 202 residues long: Glycerol-3-phosphate acyltransferase (202 aa).

Transmembrane regions (helical) follow at residues I3–S23, K51–V71, F74–L94, A116–F136, and S140–T160.

Belongs to the PlsY family. In terms of assembly, probably interacts with PlsX.

The protein resides in the cell inner membrane. The catalysed reaction is an acyl phosphate + sn-glycerol 3-phosphate = a 1-acyl-sn-glycero-3-phosphate + phosphate. The protein operates within lipid metabolism; phospholipid metabolism. Catalyzes the transfer of an acyl group from acyl-phosphate (acyl-PO(4)) to glycerol-3-phosphate (G3P) to form lysophosphatidic acid (LPA). This enzyme utilizes acyl-phosphate as fatty acyl donor, but not acyl-CoA or acyl-ACP. This is Glycerol-3-phosphate acyltransferase from Burkholderia thailandensis (strain ATCC 700388 / DSM 13276 / CCUG 48851 / CIP 106301 / E264).